Consider the following 257-residue polypeptide: Zinc transporter ZupT (257 aa).

The next 5 membrane-spanning stretches (helical) occupy residues 5 to 25 (LILT…AVLG), 32 to 52 (VLAF…LMEM), 61 to 81 (GMSP…YFGL), 109 to 129 (AILL…ATFV), and 137 to 157 (LGMG…LAVA). Residues asparagine 120 and glutamate 123 each coordinate Fe(2+). Residues glutamate 123 and histidine 148 each coordinate Zn(2+). Positions 149, 152, and 181 each coordinate Fe(2+). Glutamate 152 is a binding site for Zn(2+). A run of 3 helical transmembrane segments spans residues 182–202 (ILGG…VVMA), 203–223 (AVMA…LMPL), and 236–256 (GVLC…TAGI).

Belongs to the ZIP transporter (TC 2.A.5) family. ZupT subfamily.

It localises to the cell inner membrane. It catalyses the reaction Zn(2+)(in) = Zn(2+)(out). Functionally, mediates zinc uptake. May also transport other divalent cations. This Escherichia fergusonii (strain ATCC 35469 / DSM 13698 / CCUG 18766 / IAM 14443 / JCM 21226 / LMG 7866 / NBRC 102419 / NCTC 12128 / CDC 0568-73) protein is Zinc transporter ZupT.